Reading from the N-terminus, the 392-residue chain is tRNA-specific 2-thiouridylase MnmA (392 aa).

Residues 18–25 (GMSGGVDS) and Met44 contribute to the ATP site. Residues 104–106 (NPD) are interaction with target base in tRNA. Catalysis depends on Cys109, which acts as the Nucleophile. A disulfide bridge connects residues Cys109 and Cys208. Gly133 provides a ligand contact to ATP. Positions 158 to 160 (KDQ) are interaction with tRNA. The active-site Cysteine persulfide intermediate is the Cys208. The interaction with tRNA stretch occupies residues 320–321 (RY).

It belongs to the MnmA/TRMU family.

It is found in the cytoplasm. The catalysed reaction is S-sulfanyl-L-cysteinyl-[protein] + uridine(34) in tRNA + AH2 + ATP = 2-thiouridine(34) in tRNA + L-cysteinyl-[protein] + A + AMP + diphosphate + H(+). Functionally, catalyzes the 2-thiolation of uridine at the wobble position (U34) of tRNA, leading to the formation of s(2)U34. This Marinobacter nauticus (strain ATCC 700491 / DSM 11845 / VT8) (Marinobacter aquaeolei) protein is tRNA-specific 2-thiouridylase MnmA.